We begin with the raw amino-acid sequence, 105 residues long: Cell division protein FtsB (105 aa).

Over 1–3 (MKP) the chain is Cytoplasmic. A helical membrane pass occupies residues 4 to 21 (FVLVLFALLALLQYRLWF). The Periplasmic portion of the chain corresponds to 22–105 (GENSLTEYFT…RSSEQSQDNQ (84 aa)). Residues 38–75 (HQQSGNAELLERNEVLKEEIQDLKSGTEALEERARNEL) are a coiled coil.

Belongs to the FtsB family. As to quaternary structure, part of a complex composed of FtsB, FtsL and FtsQ.

It localises to the cell inner membrane. Functionally, essential cell division protein. May link together the upstream cell division proteins, which are predominantly cytoplasmic, with the downstream cell division proteins, which are predominantly periplasmic. The sequence is that of Cell division protein FtsB from Shewanella amazonensis (strain ATCC BAA-1098 / SB2B).